Consider the following 167-residue polypeptide: Ribosome rescue factor SmrB (167 aa).

The Smr domain maps to 91–166 (LDLHGLTREQ…GEAAILILVD (76 aa)).

It belongs to the SmrB family. As to quaternary structure, associates with collided ribosomes, but not with correctly translating polysomes.

In terms of biological role, acts as a ribosome collision sensor. Detects stalled/collided disomes (pairs of ribosomes where the leading ribosome is stalled and a second ribosome has collided with it) and endonucleolytically cleaves mRNA at the 5' boundary of the stalled ribosome. Stalled/collided disomes form a new interface (primarily via the 30S subunits) that binds SmrB. Cleaved mRNA becomes available for tmRNA ligation, leading to ribosomal subunit dissociation and rescue of stalled ribosomes. This Haemophilus influenzae (strain ATCC 51907 / DSM 11121 / KW20 / Rd) protein is Ribosome rescue factor SmrB.